The sequence spans 184 residues: GMP synthase [glutamine-hydrolyzing] subunit A (184 aa).

Residues 3-184 (PLYVVNNHGQ…FENFDGICSE (182 aa)) enclose the Glutamine amidotransferase type-1 domain. Cys-75 functions as the Nucleophile in the catalytic mechanism. Catalysis depends on residues His-162 and Glu-164.

As to quaternary structure, heterodimer composed of a glutamine amidotransferase subunit (A) and a GMP-binding subunit (B).

It carries out the reaction XMP + L-glutamine + ATP + H2O = GMP + L-glutamate + AMP + diphosphate + 2 H(+). The protein operates within purine metabolism; GMP biosynthesis; GMP from XMP (L-Gln route): step 1/1. In terms of biological role, catalyzes the synthesis of GMP from XMP. The sequence is that of GMP synthase [glutamine-hydrolyzing] subunit A from Methanoculleus marisnigri (strain ATCC 35101 / DSM 1498 / JR1).